The following is an 87-amino-acid chain: Acyl-CoA-binding protein (87 aa).

N-acetylserine is present on Ser-2. In terms of domain architecture, ACB spans 2–87 (SQADFDKAAE…VEELKKKYGI (86 aa)). At Lys-8 the chain carries N6-acetyllysine; alternate. At Lys-8 the chain carries N6-succinyllysine; alternate. Lys-14 serves as a coordination point for an acyl-CoA. Lys-17 carries the N6-succinyllysine modification. Tyr-29 carries the phosphotyrosine modification. An acyl-CoA is bound by residues 29–33 (YSHFK), Lys-51, Lys-55, and Tyr-74. N6-acetyllysine is present on Lys-51. Lys-55 carries the N6-acetyllysine; alternate modification. Residue Lys-55 is modified to N6-succinyllysine; alternate. Lys-55 is subject to N6-(2-hydroxyisobutyryl)lysine; alternate. Lys-55 carries the post-translational modification N6-malonyllysine; alternate. Residue Lys-77 is modified to N6-acetyllysine; alternate. Lys-77 carries the N6-succinyllysine; alternate modification.

Belongs to the ACBP family. As to quaternary structure, monomer.

It localises to the endoplasmic reticulum. The protein resides in the golgi apparatus. Binds medium- and long-chain acyl-CoA esters with very high affinity and may function as an intracellular carrier of acyl-CoA esters. It is also able to displace diazepam from the benzodiazepine (BZD) recognition site located on the GABA type A receptor. It is therefore possible that this protein also acts as a neuropeptide to modulate the action of the GABA receptor. This chain is Acyl-CoA-binding protein (Dbi), found in Rattus norvegicus (Rat).